The sequence spans 189 residues: NADH-quinone oxidoreductase subunit B (189 aa).

Positions 39, 40, 104, and 135 each coordinate [4Fe-4S] cluster.

It belongs to the complex I 20 kDa subunit family. In terms of assembly, NDH-1 is composed of 14 different subunits. Subunits NuoB, C, D, E, F, and G constitute the peripheral sector of the complex. The cofactor is [4Fe-4S] cluster.

It is found in the cell inner membrane. It catalyses the reaction a quinone + NADH + 5 H(+)(in) = a quinol + NAD(+) + 4 H(+)(out). NDH-1 shuttles electrons from NADH, via FMN and iron-sulfur (Fe-S) centers, to quinones in the respiratory chain. The immediate electron acceptor for the enzyme in this species is believed to be a menaquinone. Couples the redox reaction to proton translocation (for every two electrons transferred, four hydrogen ions are translocated across the cytoplasmic membrane), and thus conserves the redox energy in a proton gradient. The sequence is that of NADH-quinone oxidoreductase subunit B from Chlorobium phaeovibrioides (strain DSM 265 / 1930) (Prosthecochloris vibrioformis (strain DSM 265)).